The following is a 236-amino-acid chain: Small ribosomal subunit protein uS2c (236 aa).

It belongs to the universal ribosomal protein uS2 family.

The protein resides in the plastid. Its subcellular location is the chloroplast. This is Small ribosomal subunit protein uS2c (rps2) from Liriodendron tulipifera (Tuliptree).